Here is an 88-residue protein sequence, read N- to C-terminus: Large ribosomal subunit protein bL31B (88 aa).

It belongs to the bacterial ribosomal protein bL31 family. Type B subfamily. As to quaternary structure, part of the 50S ribosomal subunit.

This Bordetella bronchiseptica (strain ATCC BAA-588 / NCTC 13252 / RB50) (Alcaligenes bronchisepticus) protein is Large ribosomal subunit protein bL31B.